A 192-amino-acid chain; its full sequence is Probable protein adenylyltransferase y4lH (192 aa).

The region spanning Leu-52–Arg-190 is the Fido domain. ATP-binding positions include Lys-82 to Gly-83 and Gly-139 to Gly-141.

Belongs to the fic family.

It carries out the reaction L-tyrosyl-[protein] + ATP = O-(5'-adenylyl)-L-tyrosyl-[protein] + diphosphate. The enzyme catalyses L-threonyl-[protein] + ATP = 3-O-(5'-adenylyl)-L-threonyl-[protein] + diphosphate. Functionally, probable adenylyltransferase that mediates the addition of adenosine 5'-monophosphate (AMP) to specific residues of target proteins. The chain is Probable protein adenylyltransferase y4lH from Sinorhizobium fredii (strain NBRC 101917 / NGR234).